Here is a 407-residue protein sequence, read N- to C-terminus: Indoleamine 2,3-dioxygenase 1 (407 aa).

H350 serves as a coordination point for heme b. The segment at 362 to 407 (SKKKPTDGDKSEEPSNVESRGTGGTNPMTFLRSVKDTTEKALLSWP) is disordered. A compositionally biased stretch (basic and acidic residues) spans 365–374 (KPTDGDKSEE).

It belongs to the indoleamine 2,3-dioxygenase family. In terms of assembly, monomer. The cofactor is heme b. As to expression, highly expressed in epididymis, duodemum, jejunum, ileum, colon and spleen. Highly expressed in epididymis, prostate, duodemum, jejunum, ileum, colon and spleen, not detected in the liver (at protein level). Expressed in tumors only upon exposure to IFN gamma. Constitutively expressed in placenta in trophoblast cells. Expression is restricted to perinuclear regions of primary trophoblast giant cells (TGCs) of fetal origin at mid-gestation (10.5 dpc). After placentation (14 dpc), no IDO expression was detected at the maternal-fetal interface.

It is found in the cytoplasm. The protein localises to the cytosol. It carries out the reaction D-tryptophan + O2 = N-formyl-D-kynurenine. The enzyme catalyses L-tryptophan + O2 = N-formyl-L-kynurenine. Its activity is regulated as follows. Activity is inhibited by and MTH-trp (methylthiohydantoin-DL-tryptophan), modestly inhibited by L-1MT (1-methyl-L-tryptophan) but not D-1MT (1-methyl-D-tryptophan). Its function is as follows. Catalyzes the first and rate limiting step of the catabolism of the essential amino acid tryptophan along the kynurenine pathway. Involved in the peripheral immune tolerance, contributing to maintain homeostasis by preventing autoimmunity or immunopathology that would result from uncontrolled and overreacting immune responses. Tryptophan shortage inhibits T lymphocytes division and accumulation of tryptophan catabolites induces T-cell apoptosis and differentiation of regulatory T-cells. Acts as a suppressor of anti-tumor immunity. Limits the growth of intracellular pathogens by depriving tryptophan. Protects the fetus from maternal immune rejection. This is Indoleamine 2,3-dioxygenase 1 from Mus musculus (Mouse).